A 133-amino-acid chain; its full sequence is uncharacterized protein (133 aa).

The disordered stretch occupies residues 107–133 (TSHHRAAGLQSQHAPGSGRVRITGGKV).

This is an uncharacterized protein from Homo sapiens (Human).